The following is a 579-amino-acid chain: O-fucosyltransferase 24 (579 aa).

A helical; Signal-anchor for type II membrane protein transmembrane segment spans residues 58–78 (LWAFSLFLLSILGISLRLGLC). N133 is a glycosylation site (N-linked (GlcNAc...) asparagine). Position 355-357 (355-357 (HLR)) interacts with substrate. N-linked (GlcNAc...) asparagine glycans are attached at residues N528, N573, and N576.

Belongs to the glycosyltransferase GT106 family.

The protein resides in the membrane. Its pathway is glycan metabolism. This Arabidopsis thaliana (Mouse-ear cress) protein is O-fucosyltransferase 24.